Here is a 404-residue protein sequence, read N- to C-terminus: Argininosuccinate synthase (404 aa).

15–23 (AYSGGLDTS) is a binding site for ATP. Residue Tyr94 coordinates L-citrulline. An ATP-binding site is contributed by Gly124. The L-aspartate site is built by Thr126, Asn130, and Asp131. Asn130 contributes to the L-citrulline binding site. L-citrulline contacts are provided by Arg134, Ser182, Glu266, and Tyr278.

Belongs to the argininosuccinate synthase family. Type 1 subfamily. In terms of assembly, homotetramer.

It is found in the cytoplasm. The catalysed reaction is L-citrulline + L-aspartate + ATP = 2-(N(omega)-L-arginino)succinate + AMP + diphosphate + H(+). Its pathway is amino-acid biosynthesis; L-arginine biosynthesis; L-arginine from L-ornithine and carbamoyl phosphate: step 2/3. In Streptomyces avermitilis (strain ATCC 31267 / DSM 46492 / JCM 5070 / NBRC 14893 / NCIMB 12804 / NRRL 8165 / MA-4680), this protein is Argininosuccinate synthase.